We begin with the raw amino-acid sequence, 687 residues long: Adhesion G-protein coupled receptor G1 (687 aa).

Positions 1-25 (MTAQSLLQTTLFLLSLLFLVQGAHG) are cleaved as a signal peptide. Residue 26–33 (RGHREDFR) participates in heparin binding. Over 26-402 (RGHREDFRFC…VEVDAVHKHY (377 aa)) the chain is Extracellular. Intrachain disulfides connect C35–C91 and C121–C177. Residues N39, N148, and N171 are each glycosylated (N-linked (GlcNAc...) asparagine). 190 to 200 (LKHPQKASRRP) serves as a coordination point for heparin. The region spanning 224–395 (DTVSFEEDRI…AVLMVSSVEV (172 aa)) is the GAIN-B domain. N234, N303, N324, and N341 each carry an N-linked (GlcNAc...) asparagine glycan. 2 cysteine pairs are disulfide-bonded: C346–C377 and C366–C379. The tract at residues 346–395 (CVFWVEDPTLSSPGHWSSAGCETVRRETQTSCLCNHLTYFAVLMVSSVEV) is GPS. Residues 384–397 (YFAVLMVSSVEVDA) are stachel. The chain crosses the membrane as a helical span at residues 403-423 (LSLLSYVGCVVSALACVVTIA). At 424–442 (AYLCSRRKPRDYTIKVHMN) the chain is on the cytoplasmic side. The helical transmembrane segment at 443–463 (LLLAVFLLDTSFLLSEPVALT) threads the bilayer. Residues 464–470 (GSEAGCR) lie on the Extracellular side of the membrane. A helical membrane pass occupies residues 471 to 491 (ASAIFLHFSLLACLSWMGLEG). The Cytoplasmic segment spans residues 492–512 (YNLYRLVVEVFGTYVPGYLLK). A helical transmembrane segment spans residues 513 to 533 (LSAMGWGFPIFLVTLVALVDV). Topologically, residues 534-570 (DNYGPIILAVHRTPEGVIYPSMCWIRDSLVSYITNLG) are extracellular. The chain crosses the membrane as a helical span at residues 571-591 (LFSLVFLFNMAMLATMVVQIL). The Cytoplasmic portion of the chain corresponds to 592-603 (RLRPHTQKWSHV). A helical transmembrane segment spans residues 604–624 (LTLLGLSLVLGLPWALIFFSF). At 625-630 (ASGTFQ) the chain is on the extracellular side. A helical membrane pass occupies residues 631-651 (LVILYLFSIITSFQGFLIFIW). Topologically, residues 652–687 (YWSMRLQARGGPSPLKSNSDSARLPISSGSTSSSRI) are cytoplasmic. The segment at 664 to 687 (SPLKSNSDSARLPISSGSTSSSRI) is disordered. Positions 678 to 687 (SSGSTSSSRI) are enriched in low complexity.

Belongs to the G-protein coupled receptor 2 family. LN-TM7 subfamily. Heterodimer of 2 chains generated by proteolytic processing; the large extracellular N-terminal fragment (ADGRG1 NT) and the membrane-bound C-terminal fragment (ADGRG1-CT) predominantly remain associated and non-covalently linked. ADGRG1 NT self-associates in a trans-trans manner; the homophilic interaction enhances receptor signaling. Interacts with TGM2. Interacts with heparin; leading to the reduction of ADGRG1 shedding. Interacts with COL3A1. Part of a GPCR-tetraspanin complex at least consisting of ADGRG1, CD81, eventually CD9, and GNA11 in which CD81 is enhancing the association of ADGRG1 with GNA11. Post-translationally, autoproteolytically cleaved into 2 fragments; the large extracellular N-terminal fragment (ADGRG1 NT) and the membrane-bound C-terminal fragment (ADGRG1 CT) predominantly remain associated and non-covalently linked. Shedding to yield the secreted ADGRG1 N-terminal fragment seems to involve metalloprotease(s). Ubiquitinated. Undergoes polyubiquitination upon activation.

The protein resides in the cell membrane. It is found in the secreted. Its subcellular location is the membrane raft. Its activity is regulated as follows. Forms a heterodimer of 2 chains generated by proteolytic processing that remain associated through non-covalent interactions mediated by the GAIN-B domain. In the inactivated receptor, the Stachel sequence (also named stalk) is embedded in the GAIN-B domain, where it adopts a beta-strand conformation. On activation, the Stachel moves into the 7 transmembrane region and adopts a twisted hook-shaped configuration that forms contacts within the receptor, leading to coupling of a G-alpha protein, which activates signaling. The cleaved GAIN-B and N-terminal domains can then dissociate from the rest of the receptor. In terms of biological role, adhesion G-protein coupled receptor (aGPCR) for steroid hormone 17alpha-hydroxypregnenolone (17-OH), which is involved in cell adhesion and cell-cell interactions. Ligand binding causes a conformation change that triggers signaling via guanine nucleotide-binding proteins (G proteins) and modulates the activity of downstream effectors, such as RhoA pathway. ADGRG1 is coupled to G(12) and/or G(13) G proteins (GNA12 and GNA13, respectively) and mediates the activation Rho small GTPases. Acts as a potent suppressor of ferroptosis: binding to 17-OH-binding initiates signaling that down-regulates CD36 and alleviates ferroptosis-induced liver injury. Ligand-binding also induces cell adhesion activity via association with proteins such as collagen III/COL3A1 and TGM2. Mediates cell matrix adhesion in developing neurons and hematopoietic stem cells. Involved in cortical development, specifically in maintenance of the pial basement membrane integrity and in cortical lamination: association with COL3A1 in the developing brain inhibits neuronal migration via activation of the RhoA pathway. Together with TGM2, acts as a regulator of myelination and myelin repair in oligodendrocyte precursor cells. Acts as a hemostatic sensor of shear force: G protein-coupled receptor signaling is activated in response to shear force in platelets, promoting G(13) G protein signaling, and platelet shape change and aggregation in a COL3A1-dependent manner. Acts as an inhibitor of VEGFA production thereby inhibiting angiogenesis through a signaling pathway mediated by PRKCA. Plays a role in the maintenance of hematopoietic stem cells in bone marrow niche. Plays an essential role in testis development. This Pan troglodytes (Chimpanzee) protein is Adhesion G-protein coupled receptor G1 (ADGRG1).